A 126-amino-acid polypeptide reads, in one-letter code: Glycine cleavage system H protein (126 aa).

Residues 21–103 form the Lipoyl-binding domain; it reads TVTIGISEHA…YEGGWIVKVK (83 aa). An N6-lipoyllysine modification is found at Lys-62.

It belongs to the GcvH family. The glycine cleavage system is composed of four proteins: P, T, L and H. Requires (R)-lipoate as cofactor.

The glycine cleavage system catalyzes the degradation of glycine. The H protein shuttles the methylamine group of glycine from the P protein to the T protein. The protein is Glycine cleavage system H protein of Vibrio vulnificus (strain CMCP6).